Reading from the N-terminus, the 183-residue chain is Mast cell-expressed membrane protein 1 (183 aa).

Residues 1–26 are disordered; the sequence is MHASASQDKNRRKPGHDEGAHNPDYE. The Cytoplasmic portion of the chain corresponds to 1-70; the sequence is MHASASQDKN…PPWLYRTIMM (70 aa). Positions 15-24 are enriched in basic and acidic residues; it reads GHDEGAHNPD. Residues 71-91 form a helical; Signal-anchor for type II membrane protein membrane-spanning segment; the sequence is LYVLLALVFLSCIVLSALVLV. Residues 92–183 lie on the Extracellular side of the membrane; sequence KNSEMSKELW…EKKAQPQPST (92 aa). Asparagine 109 carries an N-linked (GlcNAc...) asparagine glycan.

Its subcellular location is the membrane. The chain is Mast cell-expressed membrane protein 1 from Mus musculus (Mouse).